A 343-amino-acid chain; its full sequence is MLTNRQLLILQVIINDFIRSAQPVGSRTLSKKEDITFSSATIRNEMADLEELGFIEKTHSSSGRIPSEKGYRYYVDHLLSPRKLSSNELVLIQSAFQEKIFELEKTVQKSAEILSDLTNYTSIVLGPKLSENRLKQIQLVPVQPNKAVAIMITDSGHVENKTITFSEHLDVSDIEKLMNILNSRLAGVPMDQLKDRMYKEVVMLLRTHLKDYDHILDALGNTFTSTQNESKLFFGGKINMLNQPEFHDIDRIRSLMMLIEQKNDVMQLFHPNQQGITIKIGSENNLEAMENCSLITATYSIDQKSLGSIAVIGPTRMDYGRVVSLLHHVSKDLSNALSNLYDE.

The protein belongs to the HrcA family.

Functionally, negative regulator of class I heat shock genes (grpE-dnaK-dnaJ and groELS operons). Prevents heat-shock induction of these operons. This is Heat-inducible transcription repressor HrcA from Bacillus pumilus (strain SAFR-032).